The primary structure comprises 126 residues: Holo-[acyl-carrier-protein] synthase (126 aa).

Mg(2+) is bound by residues Asp9 and Glu58.

The protein belongs to the P-Pant transferase superfamily. AcpS family. It depends on Mg(2+) as a cofactor.

The protein localises to the cytoplasm. It carries out the reaction apo-[ACP] + CoA = holo-[ACP] + adenosine 3',5'-bisphosphate + H(+). Its function is as follows. Transfers the 4'-phosphopantetheine moiety from coenzyme A to a Ser of acyl-carrier-protein. The protein is Holo-[acyl-carrier-protein] synthase of Yersinia pestis bv. Antiqua (strain Angola).